Consider the following 592-residue polypeptide: Monocopper oxidase-like protein SKS2 (592 aa).

Positions 1-23 are cleaved as a signal peptide; it reads MAATDFFFAFVFSFALIFGFSFA. N-linked (GlcNAc...) asparagine glycosylation is found at N61, N110, N172, N203, N259, N280, N295, N344, N364, N433, and N447. H455 contributes to the Cu cation binding site. Residues N476 and N536 are each glycosylated (N-linked (GlcNAc...) asparagine). A lipid anchor (GPI-anchor amidated serine) is attached at S564. The propeptide at 565-592 is removed in mature form; it reads ATKSMTNGQLILIFSMMMVLLSSFSSFC.

Belongs to the multicopper oxidase family. The cofactor is Cu cation.

It localises to the cell membrane. This chain is Monocopper oxidase-like protein SKS2 (SKS2), found in Arabidopsis thaliana (Mouse-ear cress).